The sequence spans 184 residues: Vacuolar protein sorting-associated protein 68 (184 aa).

Methionine 1 carries the N-acetylmethionine modification. Position 8 is a phosphoserine (serine 8). Residues 26 to 46 (GVYLSGALYALGFWIFLDAVL) form a helical membrane-spanning segment. Residue asparagine 52 is glycosylated (N-linked (GlcNAc...) asparagine). 3 helical membrane-spanning segments follow: residues 56-76 (VHVTFIDWIPFLCSTLGTLIV), 115-135 (LFFGFALLAGGLSGSIVVLII), and 150-170 (MGVNNVLGNVCILLSCVVLWI).

Belongs to the UPF0220 family.

Its subcellular location is the vacuole membrane. It is found in the mitochondrion. Its function is as follows. Involved in vacuolar protein sorting. This Saccharomyces cerevisiae (strain ATCC 204508 / S288c) (Baker's yeast) protein is Vacuolar protein sorting-associated protein 68 (VPS68).